Here is a 200-residue protein sequence, read N- to C-terminus: 3-isopropylmalate dehydratase small subunit (200 aa).

Belongs to the LeuD family. LeuD type 1 subfamily. Heterodimer of LeuC and LeuD.

It carries out the reaction (2R,3S)-3-isopropylmalate = (2S)-2-isopropylmalate. The protein operates within amino-acid biosynthesis; L-leucine biosynthesis; L-leucine from 3-methyl-2-oxobutanoate: step 2/4. Functionally, catalyzes the isomerization between 2-isopropylmalate and 3-isopropylmalate, via the formation of 2-isopropylmaleate. This is 3-isopropylmalate dehydratase small subunit from Yersinia pestis bv. Antiqua (strain Antiqua).